Consider the following 65-residue polypeptide: Small ribosomal subunit protein eS27 (65 aa).

Zn(2+) contacts are provided by Cys20, Cys23, Cys39, and Cys42. The C4-type zinc-finger motif lies at 20–42; sequence CIDCGNEQIVFSHPATRVRCNVC.

The protein belongs to the eukaryotic ribosomal protein eS27 family. Part of the 30S ribosomal subunit. The cofactor is Zn(2+).

The polypeptide is Small ribosomal subunit protein eS27 (Pyrococcus abyssi (strain GE5 / Orsay)).